A 354-amino-acid chain; its full sequence is Methylthioribose-1-phosphate isomerase (354 aa).

Substrate-binding positions include 58–60, Arg101, and Gln204; that span reads RGA. Asp245 (proton donor) is an active-site residue. Residue 255–256 participates in substrate binding; the sequence is NK.

Belongs to the eIF-2B alpha/beta/delta subunits family. MtnA subfamily.

It carries out the reaction 5-(methylsulfanyl)-alpha-D-ribose 1-phosphate = 5-(methylsulfanyl)-D-ribulose 1-phosphate. It participates in amino-acid biosynthesis; L-methionine biosynthesis via salvage pathway; L-methionine from S-methyl-5-thio-alpha-D-ribose 1-phosphate: step 1/6. Its function is as follows. Catalyzes the interconversion of methylthioribose-1-phosphate (MTR-1-P) into methylthioribulose-1-phosphate (MTRu-1-P). The protein is Methylthioribose-1-phosphate isomerase of Xanthomonas axonopodis pv. citri (strain 306).